A 395-amino-acid chain; its full sequence is MTMRSKTFSDRILNDSEFFKWCQKEESRNADSITLYKSILEFESKFKSGSPSLSLLKLARHIHRKYVSLNTGTCNVIEDSTRTEMSKRVHEVLDGKSPYIELFDPLKQPLFQHLRSMHTEYSTTTADVSNTWEDTSSTDSSDKGATIWFNDDAIDRSSRHEISQNTVTHESEDDRFAFFNAVCTRLNSLQETKNSSETEEEKKKERSADPYGSDGFAPPPQSTQTHTLRNLPKRFESLYKKKRQQNTTTTDSSGFGSNASDFWSFERYGKSNHGTLERPNRLFPGSNNGFSTLQPKKRSGEIQKLTVELRYENDVPMVAKISANQSVTLRYFRHLFGLHYSDNCRFFFKSTCEDGSAHYQWTLLFQDDDILPVFQNRITAICRMCPPPPEDHHLI.

An RGS domain is found at 4–132 (RSKTFSDRIL…TTTADVSNTW (129 aa)). A disordered region spans residues 190–230 (QETKNSSETEEEKKKERSADPYGSDGFAPPPQSTQTHTLRN). A compositionally biased stretch (basic and acidic residues) spans 194–208 (NSSETEEEKKKERSA). The region spanning 301 to 386 (EIQKLTVELR…RITAICRMCP (86 aa)) is the DIX domain.

In terms of assembly, interacts with bar-1, dsh-2, gsk-3, and mig-5.

Its function is as follows. Works in parallel with pry-1 in negatively regulating bar-1 signaling in vulval precursor cells and Q neuroblasts. Shown to have a role in excretory cell development. This is Axin-like protein 1 (axl-1) from Caenorhabditis briggsae.